Reading from the N-terminus, the 195-residue chain is C2 domain-containing protein DDB_G0290753 (195 aa).

Positions 38–161 (KKLTKETKFE…NIKKYSYTFK (124 aa)) constitute a C2 domain. Residues Asp-72, Asp-78, Asp-131, Asp-133, and Asp-139 each contribute to the Ca(2+) site.

Ca(2+) serves as cofactor.

The sequence is that of C2 domain-containing protein DDB_G0290753 from Dictyostelium discoideum (Social amoeba).